The primary structure comprises 105 residues: Photosystem II 5 kDa protein, chloroplastic (105 aa).

Residues 1–77 (MASITMTTSF…ICSVAGVATA (77 aa)) constitute a chloroplast transit peptide.

In terms of processing, the maturation of the PSII-T precursor to its final form occurs through a two step process. First, a stromal intermediate is formed, which, upon translocation into the thylakoid membrane, is processed to the mature protein.

Its subcellular location is the plastid. The protein resides in the chloroplast thylakoid membrane. May be a component of the oxygen-evolving complex. This Gossypium hirsutum (Upland cotton) protein is Photosystem II 5 kDa protein, chloroplastic (PSBT).